A 444-amino-acid chain; its full sequence is NAD(P)-specific glutamate dehydrogenase (444 aa).

Residues Lys88, Gln109, and Lys112 each coordinate substrate. Lys124 serves as the catalytic Proton donor. A substrate-binding site is contributed by Gly163. NADP(+)-binding residues include Thr207 and Asn238. Ser376 is a binding site for substrate.

This sequence belongs to the Glu/Leu/Phe/Val dehydrogenases family. As to quaternary structure, homohexamer.

The catalysed reaction is L-glutamate + NAD(+) + H2O = 2-oxoglutarate + NH4(+) + NADH + H(+). The enzyme catalyses L-glutamate + NADP(+) + H2O = 2-oxoglutarate + NH4(+) + NADPH + H(+). In terms of biological role, catalyzes the reversible oxidative deamination of glutamate to alpha-ketoglutarate and ammonia. P.ruminicola possess both NADP(H)- and NAD(H)-dependent activities on the same enzyme, suggesting that both anabolic and catabolic forms of the enzyme might occur. This chain is NAD(P)-specific glutamate dehydrogenase (gdhA), found in Xylanibacter ruminicola (Prevotella ruminicola).